We begin with the raw amino-acid sequence, 226 residues long: uncharacterized protein (226 aa).

An HTH cro/C1-type domain is found at Ile-168–Gln-226. Residues Gln-179–Thr-198 constitute a DNA-binding region (H-T-H motif).

This is an uncharacterized protein from Acanthamoeba polyphaga mimivirus (APMV).